Reading from the N-terminus, the 233-residue chain is C-type lectin domain-containing protein 87 (233 aa).

The signal sequence occupies residues 1 to 19 (MRFCLLVAFILPGLFLVHA). O-linked (Xyl...) (chondroitin sulfate) serine glycosylation occurs at serine 31. A glycan (N-linked (GlcNAc...) asparagine) is linked at asparagine 81. Positions 93–223 (FADSCYWIEK…CTYMLYSICE (131 aa)) constitute a C-type lectin domain. 2 cysteine pairs are disulfide-bonded: cysteine 114–cysteine 222 and cysteine 193–cysteine 214. A glycan (N-linked (GlcNAc...) asparagine) is linked at asparagine 225.

The polypeptide is C-type lectin domain-containing protein 87 (Caenorhabditis elegans).